Consider the following 498-residue polypeptide: ATP synthase subunit beta, chloroplastic (498 aa).

Residue 172-179 (GGAGVGKT) coordinates ATP.

This sequence belongs to the ATPase alpha/beta chains family. F-type ATPases have 2 components, CF(1) - the catalytic core - and CF(0) - the membrane proton channel. CF(1) has five subunits: alpha(3), beta(3), gamma(1), delta(1), epsilon(1). CF(0) has four main subunits: a(1), b(1), b'(1) and c(9-12).

The protein resides in the plastid. It is found in the chloroplast thylakoid membrane. The enzyme catalyses ATP + H2O + 4 H(+)(in) = ADP + phosphate + 5 H(+)(out). Produces ATP from ADP in the presence of a proton gradient across the membrane. The catalytic sites are hosted primarily by the beta subunits. The polypeptide is ATP synthase subunit beta, chloroplastic (Agrostis stolonifera (Creeping bentgrass)).